A 249-amino-acid polypeptide reads, in one-letter code: 2,3-bisphosphoglycerate-dependent phosphoglycerate mutase (249 aa).

Substrate-binding positions include 9 to 16 (RHGQSQWN), 22 to 23 (TG), Arg61, 88 to 91 (ERHY), Lys99, 115 to 116 (RR), and 184 to 185 (GN). Residue His10 is the Tele-phosphohistidine intermediate of the active site. Glu88 acts as the Proton donor/acceptor in catalysis.

This sequence belongs to the phosphoglycerate mutase family. BPG-dependent PGAM subfamily. As to quaternary structure, homodimer.

The enzyme catalyses (2R)-2-phosphoglycerate = (2R)-3-phosphoglycerate. It participates in carbohydrate degradation; glycolysis; pyruvate from D-glyceraldehyde 3-phosphate: step 3/5. Functionally, catalyzes the interconversion of 2-phosphoglycerate and 3-phosphoglycerate. This Xanthomonas campestris pv. campestris (strain 8004) protein is 2,3-bisphosphoglycerate-dependent phosphoglycerate mutase.